The sequence spans 759 residues: LIM domain and actin-binding protein 1 (759 aa).

Met1 is modified (N-acetylmethionine). A phosphoserine mark is found at Ser4, Ser15, and Ser55. Positions 78–131 are disordered; it reads NPGLGAESHTDSLRNSSTEIRHRADHPPAEVTSHAASGAKADQEEQIHPRSRLR. Positions 96 to 105 are enriched in basic and acidic residues; sequence EIRHRADHPP. Phosphoserine is present on Ser132. A compositionally biased stretch (basic and acidic residues) spans 146 to 177; the sequence is KDGEDLKDHSTESKKMENCLGESRHEVEKSEI. The segment at 146 to 182 is disordered; that stretch reads KDGEDLKDHSTESKKMENCLGESRHEVEKSEISENTD. Positions 164-166 match the Required for interaction with NPC1L1 motif; it reads CLG. 2 positions are modified to phosphoserine: Ala183 and Ser225. 2 disordered regions span residues 211-264 and 323-381; these read ILRA…RLSE and EKIS…AMKK. Tyr229 is subject to Phosphotyrosine. Residues Ser230 and Ser242 each carry the phosphoserine modification. Positions 247 to 258 are enriched in basic and acidic residues; it reads DSEKNESRRNLE. Phosphoserine is present on residues Ser263, Ser343, Ser350, Ser362, Ser365, Ser369, and Ser374. Low complexity predominate over residues 362-376; it reads SPDSRASSLSESSPP. Positions 388–448 constitute an LIM zinc-binding domain; that stretch reads ETCVECQKTV…KPHFNQLFKS (61 aa). At Lys439 the chain carries N6-succinyllysine. Phosphoserine is present on Ser490. The required for interaction with MYO5B stretch occupies residues 493 to 513; the sequence is VEDAPIAKVGVLAASMEAKAS. A disordered region spans residues 509 to 709; the sequence is EAKASSQQEK…QEPKSLNWSS (201 aa). Composition is skewed to basic and acidic residues over residues 516–527 and 556–567; these read QEKEDKPAETKK and WPPEDEISKPEV. The span at 595–607 shows a compositional bias: polar residues; it reads ASFQSTSVKSPKT. Phosphoserine is present on residues Ser601, Ser604, Ser609, and Ser617. Positions 644–655 are enriched in polar residues; it reads KNGNVGKTTWQN. The span at 656–673 shows a compositional bias: basic and acidic residues; it reads KESKGETGKRSKEGHSLE. Over residues 674–691 the composition is skewed to acidic residues; the sequence is MENENLVENGADSDEDDN. Residues Ser686, Ser692, Ser698, Ser726, and Ser741 each carry the phosphoserine modification. Polar residues predominate over residues 693-709; the sequence is FLKQQSPQEPKSLNWSS.

As to quaternary structure, interacts with NPC1L1; bridges NPC1L1 with MYO5B. Interacts with MYO5B; bridges NPC1L1 with MYO5B. Interacts with PXN; this complex stabilizes actin dynamics. Interacts with F-actin and G-actin. Interacts with LUZP1 (via C-terminus); both proteins restrict ciliation and may work together to regulate this process. Binds RAB40B (GTP-bound); interaction influences LIMA1 subcellular localization in lamellipodia during cell migration. Post-translationally, ubiquitinated by the ECS(RAB40B) complex leading to its degradation. In terms of processing, phosphorylation of the C-terminal region by MAPK1/MAPK3 reduces its association with F-actin and contributes to actin filament reorganization and enhances cell motility. Highly expressed in placenta, kidney, pancreas, prostate, ovary, spleen and heart. Also detected in lung, liver, brain, skeletal muscle, thymus, testis and intestine. Not detected in leukocytes. Isoform Beta expressed generally at very low levels. Isoform Alpha abundant in epithelial cells from mammary gland, prostate and in normal oral keratinocytes. Low levels in aortic endothelial cells and dermal fibroblasts. Not detectable in myocardium.

It is found in the cytoplasm. The protein resides in the cell junction. It localises to the focal adhesion. The protein localises to the cytoskeleton. Its subcellular location is the stress fiber. It is found in the cell membrane. The protein resides in the cell projection. It localises to the ruffle. The protein localises to the lamellipodium. Its function is as follows. Actin-binding protein involved in actin cytoskeleton regulation and dynamics. Increases the number and size of actin stress fibers and inhibits membrane ruffling. Inhibits actin filament depolymerization. Bundles actin filaments, delays filament nucleation and reduces formation of branched filaments. Acts as a negative regulator of primary cilium formation. Plays a role in cholesterol homeostasis. Influences plasma cholesterol levels through regulation of intestinal cholesterol absorption. May act as a scaffold protein by regulating NPC1L1 transportation, an essential protein for cholesterol absorption, to the plasma membrane by recruiting MYO5B to NPC1L1, and thus facilitates cholesterol uptake. In Homo sapiens (Human), this protein is LIM domain and actin-binding protein 1.